The primary structure comprises 599 residues: ATP-dependent rRNA helicase SPB4 (599 aa).

The short motif at 7–35 (WDTLDYTLQPWIRTAVDAMGYETMTPVQA) is the Q motif element. A Helicase ATP-binding domain is found at 38–224 (IPLFARNKDV…KTGMRNPVKV (187 aa)). ATP is bound at residue 51 to 58 (SVTGSGKT). The short motif at 172 to 175 (DEAD) is the DEAD box element. A Helicase C-terminal domain is found at 248–415 (KLQLLLTLLN…GLPEIIRAWI (168 aa)). The stretch at 501-561 (QREKARKLAK…LKRKAIEEKL (61 aa)) forms a coiled coil. Positions 559 to 599 (EKLIENSDDSDNEVETDWKDIVRQRKKKKTNSGMQGDFGDL) are disordered. Over residues 564-573 (NSDDSDNEVE) the composition is skewed to acidic residues.

It belongs to the DEAD box helicase family. DDX55/SPB4 subfamily. Component of pre-60S ribosomal complexes.

It localises to the nucleus. The protein resides in the nucleolus. The enzyme catalyses ATP + H2O = ADP + phosphate + H(+). Its function is as follows. ATP-binding RNA helicase involved in the biogenesis of 60S ribosomal subunits. Binds 90S pre-ribosomal particles and dissociates from pre-60S ribosomal particles after processing of 27SB pre-rRNA. Required for the normal formation of 18S rRNA through the processing of pre-rRNAs at sites A0, A1 and A2, and the normal formation of 25S and 5.8S rRNAs through the processing of pre-rRNAs at sites C1 and C2. This chain is ATP-dependent rRNA helicase SPB4, found in Eremothecium gossypii (strain ATCC 10895 / CBS 109.51 / FGSC 9923 / NRRL Y-1056) (Yeast).